Here is a 158-residue protein sequence, read N- to C-terminus: MQGRLSAWLAKHKLAHRPLGFDYQGTETLQIKAEDWVSIAVALYVYGFNYLRSQCAYDVAPGGSLASVYHLTKINDNADQPEEVCIKVFVPREDPRIPSVLRIWKGANFQERESYDMLGIFYESHPCLKRILMPESWIGWPLRKDYIAPDFYEIQDSH.

This sequence belongs to the complex I 30 kDa subunit family. In terms of assembly, NDH is composed of at least 16 different subunits, 5 of which are encoded in the nucleus.

It localises to the plastid. The protein localises to the chloroplast thylakoid membrane. It carries out the reaction a plastoquinone + NADH + (n+1) H(+)(in) = a plastoquinol + NAD(+) + n H(+)(out). It catalyses the reaction a plastoquinone + NADPH + (n+1) H(+)(in) = a plastoquinol + NADP(+) + n H(+)(out). Its function is as follows. NDH shuttles electrons from NAD(P)H:plastoquinone, via FMN and iron-sulfur (Fe-S) centers, to quinones in the photosynthetic chain and possibly in a chloroplast respiratory chain. The immediate electron acceptor for the enzyme in this species is believed to be plastoquinone. Couples the redox reaction to proton translocation, and thus conserves the redox energy in a proton gradient. The chain is NAD(P)H-quinone oxidoreductase subunit J, chloroplastic from Cryptomeria japonica (Japanese cedar).